The sequence spans 233 residues: 3-dehydroquinate dehydratase (233 aa).

Residues 34 to 36 (ELR) and arginine 64 each bind 3-dehydroquinate. Histidine 118 acts as the Proton donor/acceptor in catalysis. Lysine 145 (schiff-base intermediate with substrate) is an active-site residue. Residues arginine 185, serine 205, and glutamine 209 each coordinate 3-dehydroquinate.

It belongs to the type-I 3-dehydroquinase family. As to quaternary structure, homodimer.

It carries out the reaction 3-dehydroquinate = 3-dehydroshikimate + H2O. It participates in metabolic intermediate biosynthesis; chorismate biosynthesis; chorismate from D-erythrose 4-phosphate and phosphoenolpyruvate: step 3/7. In terms of biological role, involved in the third step of the chorismate pathway, which leads to the biosynthesis of aromatic amino acids. Catalyzes the cis-dehydration of 3-dehydroquinate (DHQ) and introduces the first double bond of the aromatic ring to yield 3-dehydroshikimate. In Coxiella burnetii (strain CbuG_Q212) (Coxiella burnetii (strain Q212)), this protein is 3-dehydroquinate dehydratase.